The sequence spans 594 residues: MSGSGDRRGGGPPGSHSGWETMGKKSKKPGQAGGRQWAPWSSTNVTPNTARPAWGGSGSSHPSGTSWAQAPDHGAATRGNPRPPSQTSRPVLAPPLANGWQWQSRPRPSGSEVKKDDAPPSGSVPEVENVDGNNTSDDDDDDDDDLSDDISDDYDSDASEKSFETRKTNKWFKEFFEVLNTLSLEQINEQTRQWHCPACKNGPGAIDWYKGLQPLVSHARTKGSTRVKLHRELAALLEEELSRRGTSVLPAGEQFGKWKGLQESTDREIVWPPMVIVMNTFLEKDEDDKWKGMGNQELLDYFGEYEASKARHAYGPSGHRGMSVLIFESSAVGYMEAERLHKHFVNQGTDRNSWHLRKVRFVPGGKRQLYGFLANKEDMEAFNKHCHGKSRLKYEMRSYNEMVVIQMKQMSEDNQQLNYLKNKMVKTEQRSKAVEESLGVVTQKLRETIEENIFVRSKAKEKHMEYEEEMKSQEEIFHGLIEDIHKATEDKEKQFEKLLQEERSKARRFDVDSGTMKDRQLRKEYVQKFIDCQVKDVAEFEVERDELIKVHEDKKLKLKKEYMDLELELEKEFDAALTGLMEKHKPDTFEASSS.

A disordered region spans residues 1-163 (MSGSGDRRGG…YDSDASEKSF (163 aa)). Residues 39 to 49 (PWSSTNVTPNT) are compositionally biased toward polar residues. Residues 136–157 (SDDDDDDDDDLSDDISDDYDSD) are compositionally biased toward acidic residues. Coiled coils occupy residues 408–509 (KQMS…ARRF) and 545–577 (DELI…DAAL).

It belongs to the SGS3 family. In terms of tissue distribution, expressed in a dome of cells at the tip of the meristem that extends into the adaxial side of the initiating primordium. During the later stages of leaf development, expression becomes restricted to the margin and vasculature.

In terms of biological role, required for the biogenesis of miRNAs and trans-acting siRNAs and essential for the specification of adaxial/abaxial organ polarity. May be involved in natural virus resistance. The chain is Protein SUPPRESSOR OF GENE SILENCING 3 homolog (SGS3) from Zea mays (Maize).